Consider the following 509-residue polypeptide: DAP3-binding cell death enhancer 1 (509 aa).

The transit peptide at 1–23 (MWRLTGILGRALPRLLGPGFRGI) directs the protein to the mitochondrion. 2 disordered regions span residues 19 to 60 (GFRG…RNRD) and 143 to 185 (VLPS…PGLL). A propeptide spans 24-101 (TPKPTSSDGP…AVLALHLARQ (78 aa)) (extended MTS). Polar residues predominate over residues 26 to 40 (KPTSSDGPQTTSTTL). Basic and acidic residues-rich tracts occupy residues 46–60 (NFDR…RNRD) and 156–168 (GLRE…EEPA). TPR repeat units lie at residues 213–245 (AGPP…QLSV), 246–278 (AIAF…RGYS), 279–313 (KAQY…VQGH), 314–351 (SLAQ…DSGL), 352–385 (TEAQ…SNGD), 386–423 (SQSR…GNEP), and 470–498 (ASST…AMPS). An SIFI-degron motif is present at residues 307–326 (LAAVQGHSLAQYRYARCLLQ).

Belongs to the DELE1 family. In terms of assembly, interacts with DAP3. As to quaternary structure, interacts (via TPR repeats) with EIF2AK1/HRI; activating the protein kinase activity of EIF2AK1/HRI, thereby promoting the integrated stress response (ISR). Homooctamer; oligomerization is required to activate EIF2AK1/HRI. Interacts (via TPR repeats) with EIF2AK1/HRI; activating the protein kinase activity of EIF2AK1/HRI, thereby promoting the integrated stress response (ISR). Unstable protein in absence of stress: imported in the mitochondrial matrix following processing by the mitochondrial-processing peptidase (MPP), where it is degraded by LONP1. Stabilized in response to iron deficiency: iron deficiency impairs mitochondrial import, promoting localization at the mitochondrial surface and stabilization. Cleaved by OMA1 in response to mitochondrial stress, generating the DAP3-binding cell death enhancer 1 short form (DELE1(S) or S-DELE1) that accumulates in the cytosol and activates the protein kinase activity of EIF2AK1/HRI. Protein cleavage by OMA1 can take place at different positions, and apparently does not require a specific sequence motif. Post-translationally, ubiquitinated and degraded by the SIFI complex once the mitochondrial stress has been resolved, thereby providing stress response silencing. Within the SIFI complex, UBR4 initiates ubiquitin chain that are further elongated or branched by KCMF1.

The protein localises to the mitochondrion. It localises to the mitochondrion outer membrane. Its subcellular location is the mitochondrion inner membrane. It is found in the cytoplasm. The protein resides in the cytosol. Functionally, protein kinase activator that acts as a key activator of the integrated stress response (ISR) following various stresses, such as iron deficiency, mitochondrial stress or mitochondrial DNA breaks. Detects impaired protein import and processing in mitochondria, activating the ISR. May also required for the induction of death receptor-mediated apoptosis through the regulation of caspase activation. Protein kinase activator that activates the ISR in response to iron deficiency: iron deficiency impairs mitochondrial import, promoting DELE1 localization at the mitochondrial surface, where it binds and activates EIF2AK1/HRI to trigger the ISR. In terms of biological role, protein kinase activator generated by protein cleavage in response to mitochondrial stress, which accumulates in the cytosol and specifically binds to and activates the protein kinase activity of EIF2AK1/HRI. It thereby activates the integrated stress response (ISR): EIF2AK1/HRI activation promotes eIF-2-alpha (EIF2S1) phosphorylation, leading to a decrease in global protein synthesis and the induction of selected genes, including the transcription factor ATF4, the master transcriptional regulator of the ISR. Also acts as an activator of PRKN-independent mitophagy: activates the protein kinase activity of EIF2AK1/HRI in response to mitochondrial damage, promoting eIF-2-alpha (EIF2S1) phosphorylation, leading to mitochondrial localization of EIF2S1 followed by induction of mitophagy. The polypeptide is DAP3-binding cell death enhancer 1 (Rattus norvegicus (Rat)).